The chain runs to 601 residues: Phosphomethylpyrimidine synthase (601 aa).

Substrate contacts are provided by residues asparagine 224, methionine 253, tyrosine 282, histidine 318, 338 to 340 (SRG), 379 to 382 (DGLR), and glutamate 418. Histidine 422 is a binding site for Zn(2+). A substrate-binding site is contributed by tyrosine 445. Histidine 486 provides a ligand contact to Zn(2+). Positions 566, 569, and 574 each coordinate [4Fe-4S] cluster.

This sequence belongs to the ThiC family. In terms of assembly, homodimer. Requires [4Fe-4S] cluster as cofactor.

It carries out the reaction 5-amino-1-(5-phospho-beta-D-ribosyl)imidazole + S-adenosyl-L-methionine = 4-amino-2-methyl-5-(phosphooxymethyl)pyrimidine + CO + 5'-deoxyadenosine + formate + L-methionine + 3 H(+). It participates in cofactor biosynthesis; thiamine diphosphate biosynthesis. Its function is as follows. Catalyzes the synthesis of the hydroxymethylpyrimidine phosphate (HMP-P) moiety of thiamine from aminoimidazole ribotide (AIR) in a radical S-adenosyl-L-methionine (SAM)-dependent reaction. This chain is Phosphomethylpyrimidine synthase, found in Xylella fastidiosa (strain 9a5c).